Consider the following 115-residue polypeptide: UPF0295 protein BPUM_0828 (115 aa).

Helical transmembrane passes span 13 to 33 (TFAL…VFFK) and 41 to 61 (FFML…FWIG).

It belongs to the UPF0295 family.

The protein resides in the cell membrane. The chain is UPF0295 protein BPUM_0828 from Bacillus pumilus (strain SAFR-032).